A 506-amino-acid polypeptide reads, in one-letter code: Maturase K (506 aa).

The protein belongs to the intron maturase 2 family. MatK subfamily.

Its subcellular location is the plastid. It localises to the chloroplast. Its function is as follows. Usually encoded in the trnK tRNA gene intron. Probably assists in splicing its own and other chloroplast group II introns. In Trifolium resupinatum (Persian clover), this protein is Maturase K.